Consider the following 557-residue polypeptide: Dihydroxy-acid dehydratase (557 aa).

Asp78 is a Mg(2+) binding site. Position 119 (Cys119) interacts with [2Fe-2S] cluster. Residues Asp120 and Lys121 each coordinate Mg(2+). Lys121 carries the N6-carboxylysine modification. Cys192 is a [2Fe-2S] cluster binding site. Glu442 is a binding site for Mg(2+). Catalysis depends on Ser468, which acts as the Proton acceptor.

Belongs to the IlvD/Edd family. In terms of assembly, homodimer. Requires [2Fe-2S] cluster as cofactor. The cofactor is Mg(2+).

The catalysed reaction is (2R)-2,3-dihydroxy-3-methylbutanoate = 3-methyl-2-oxobutanoate + H2O. The enzyme catalyses (2R,3R)-2,3-dihydroxy-3-methylpentanoate = (S)-3-methyl-2-oxopentanoate + H2O. It participates in amino-acid biosynthesis; L-isoleucine biosynthesis; L-isoleucine from 2-oxobutanoate: step 3/4. The protein operates within amino-acid biosynthesis; L-valine biosynthesis; L-valine from pyruvate: step 3/4. In terms of biological role, functions in the biosynthesis of branched-chain amino acids. Catalyzes the dehydration of (2R,3R)-2,3-dihydroxy-3-methylpentanoate (2,3-dihydroxy-3-methylvalerate) into 2-oxo-3-methylpentanoate (2-oxo-3-methylvalerate) and of (2R)-2,3-dihydroxy-3-methylbutanoate (2,3-dihydroxyisovalerate) into 2-oxo-3-methylbutanoate (2-oxoisovalerate), the penultimate precursor to L-isoleucine and L-valine, respectively. This Bacillus cytotoxicus (strain DSM 22905 / CIP 110041 / 391-98 / NVH 391-98) protein is Dihydroxy-acid dehydratase.